The sequence spans 271 residues: ATP synthase subunit a (271 aa).

5 consecutive transmembrane segments (helical) span residues 38-58 (FWTL…LFLV), 100-120 (LIAP…LMDL), 146-166 (DVNI…FYSI), 220-240 (LIFI…LNVP), and 242-262 (AIFH…LTIV).

Belongs to the ATPase A chain family. F-type ATPases have 2 components, CF(1) - the catalytic core - and CF(0) - the membrane proton channel. CF(1) has five subunits: alpha(3), beta(3), gamma(1), delta(1), epsilon(1). CF(0) has three main subunits: a(1), b(2) and c(9-12). The alpha and beta chains form an alternating ring which encloses part of the gamma chain. CF(1) is attached to CF(0) by a central stalk formed by the gamma and epsilon chains, while a peripheral stalk is formed by the delta and b chains.

It is found in the cell inner membrane. In terms of biological role, key component of the proton channel; it plays a direct role in the translocation of protons across the membrane. This chain is ATP synthase subunit a, found in Salmonella arizonae (strain ATCC BAA-731 / CDC346-86 / RSK2980).